The chain runs to 283 residues: Glutamate racemase (283 aa).

Residues 28–29 (DS) and 60–61 (YG) contribute to the substrate site. C92 functions as the Proton donor/acceptor in the catalytic mechanism. 93-94 (NT) is a substrate binding site. Residue C204 is the Proton donor/acceptor of the active site. 205 to 206 (TH) provides a ligand contact to substrate.

This sequence belongs to the aspartate/glutamate racemases family.

It catalyses the reaction L-glutamate = D-glutamate. It functions in the pathway cell wall biogenesis; peptidoglycan biosynthesis. Functionally, provides the (R)-glutamate required for cell wall biosynthesis. In Salmonella choleraesuis (strain SC-B67), this protein is Glutamate racemase.